Here is a 425-residue protein sequence, read N- to C-terminus: COP9 signalosome complex subunit 1 (425 aa).

The 161-residue stretch at 219–379 folds into the PCI domain; that stretch reads ASSGVPPEIY…KSKALQTLEN (161 aa).

The protein belongs to the CSN1 family. In terms of assembly, component of the COP9 signalosome (CSN) complex.

It is found in the cytoplasm. The protein resides in the nucleus. In terms of biological role, component of the COP9 signalosome (CSN) complex that acts as an regulator of the ubiquitin (Ubl) conjugation pathway by mediating the deneddylation of the cullin subunit of SCF-type E3 ubiquitin-protein ligase complexes. The CSN complex is involved in the regulation of the circadian clock through its control of the stability of the SCF(FWD-1) complex. This Neurospora crassa (strain ATCC 24698 / 74-OR23-1A / CBS 708.71 / DSM 1257 / FGSC 987) protein is COP9 signalosome complex subunit 1 (csn-1).